Reading from the N-terminus, the 130-residue chain is MFMIKKKKNKNKFKKNINLGIAHIHTTFNNTILTITDLQGNTITWSSAGSLGFKGSRKSTPFAAQIASSTAAKAALEHGMLKVEVFIKGPGAGREASIRSLQASGLEITSIRDVTTVPHNGCRPPKRPRG.

Belongs to the universal ribosomal protein uS11 family. As to quaternary structure, part of the 30S ribosomal subunit. Interacts with proteins S7 and S18. Binds to IF-3.

Its function is as follows. Located on the platform of the 30S subunit, it bridges several disparate RNA helices of the 16S rRNA. Forms part of the Shine-Dalgarno cleft in the 70S ribosome. The sequence is that of Small ribosomal subunit protein uS11 from Phytoplasma mali (strain AT).